We begin with the raw amino-acid sequence, 2860 residues long: Methylcytosine dioxygenase TET (2860 aa).

Disordered regions lie at residues 51 to 255 (HYTT…PHLQ) and 457 to 562 (GQPH…DAVS). Residues 57–70 (HHPHSHSHPHHHYQ) are compositionally biased toward basic residues. Composition is skewed to low complexity over residues 71–181 (QHYP…AASG) and 191–231 (ANAN…SNGS). Residues 468–482 (TPTSYDGNNSNNSYP) show a composition bias toward polar residues. Low complexity-rich tracts occupy residues 492–508 (HTPH…TTTP) and 536–546 (SLESSAESEAS). The segment at 591–631 (SKKKRKRCGECVGCQRKDNCGECAPCRNDKSHQICKQRRCE) adopts a CXXC-type zinc-finger fold. Zn(2+) is bound by residues cysteine 598, cysteine 601, cysteine 604, cysteine 610, cysteine 613, cysteine 616, cysteine 625, and cysteine 630. Disordered regions lie at residues 641–734 (GADG…NLQQ), 771–810 (QHFQ…DQPQ), 920–1113 (QVSA…EGYA), 1130–1155 (RKSD…QQTG), 1170–1195 (LSAN…QQVQ), 1209–1356 (AVGG…HSQY), and 1437–1460 (GYQH…IHGH). The segment covering 692–706 (TKANKLNAAAASATS) has biased composition (low complexity). Positions 718 to 732 (LPQQSPNTTSATGNL) are enriched in polar residues. 3 stretches are compositionally biased toward low complexity: residues 771–804 (QHFQ…QIQT), 930–942 (QQQQ…QQQQ), and 985–1021 (ATNS…GTTT). Positions 1040-1054 (PNQAVPQSPTRSNML) are enriched in polar residues. The segment covering 1076–1085 (QQQQQQQQQQ) has biased composition (low complexity). The span at 1086–1097 (HLSSPPMQDWNW) shows a compositional bias: polar residues. A compositionally biased stretch (low complexity) spans 1141-1153 (LQQQPQQVQQQQQ). Low complexity-rich tracts occupy residues 1248-1263 (QDAQ…QPGQ) and 1299-1312 (SRAA…AEAA). Pro residues predominate over residues 1337 to 1349 (PPHPHAAGGPPPG). 5 residues coordinate Zn(2+): cysteine 1638, cysteine 1640, cysteine 1699, histidine 1725, and cysteine 1727. The tract at residues 1657-2666 (LGTASSLMDL…RMTLIFYQHR (1010 aa)) is interaction with wds. Residue arginine 1767 participates in 2-oxoglutarate binding. Positions 1777, 1779, 1795, 1804, and 1862 each coordinate Zn(2+). Cysteine 1878 provides a ligand contact to 2-oxoglutarate. Histidine 1884 lines the Zn(2+) pocket. Histidine 1886 and aspartate 1888 together coordinate Fe cation. Asparagine 1891 provides a ligand contact to substrate. 2-oxoglutarate is bound at residue histidine 1919. 6 disordered regions span residues 1966–2115 (PCRR…LMSS), 2198–2229 (LTPS…PTGA), 2263–2334 (SNLT…NLTE), 2350–2371 (APLT…PPSD), 2422–2444 (MYPQ…MYGH), and 2536–2598 (LPDL…NSTK). Over residues 1979 to 1989 (EAAPPDGDQDA) the composition is skewed to acidic residues. Composition is skewed to low complexity over residues 1993-2015 (ANSQ…QQSS) and 2029-2059 (GNGV…STPG). Residues 2069 to 2086 (RCQTPVTNNPSPAGSAFS) show a composition bias toward polar residues. The segment covering 2212 to 2229 (PPATSIAGGTTTGAPTGA) has biased composition (low complexity). Residues 2263–2275 (SNLTNPGGVTTEV) are compositionally biased toward polar residues. Low complexity predominate over residues 2276 to 2285 (QQQHQQAQQQ). A compositionally biased stretch (gly residues) spans 2290-2304 (GGVGPGGLPVVGGAP). Residues 2426-2437 (QTPPPTPPPPSP) are compositionally biased toward pro residues. Over residues 2540–2562 (SNGQTNSDTVATPTPTGDSSSND) the composition is skewed to polar residues. The span at 2570–2594 (AGNQAPASGAGAATTAPPIASPGST) shows a compositional bias: low complexity. Histidine 2642 is a Fe cation binding site. 2657–2659 (RMT) is a 2-oxoglutarate binding site. 2663–2665 (YQH) provides a ligand contact to substrate. Histidine 2673 lines the Zn(2+) pocket. The segment at 2729 to 2860 (KESSANGQQL…HQQLPQQQQT (132 aa)) is disordered. Polar residues predominate over residues 2732–2742 (SANGQQLKNGA). A compositionally biased stretch (basic and acidic residues) spans 2750 to 2768 (SSDSKKSQANEQSKNEKVA). Low complexity-rich tracts occupy residues 2772–2785 (PTLT…LFPT) and 2798–2821 (NSSP…QQQH). The span at 2822–2849 (LPPPPGSGLIHPPPGTPTGTAAPPPLPT) shows a compositional bias: pro residues. A compositionally biased stretch (low complexity) spans 2850–2860 (PHQQLPQQQQT).

The protein belongs to the TET family. Interacts (via C-terminus) with wds (via WD repeats). It depends on Fe(2+) as a cofactor. Requires Zn(2+) as cofactor. Expressed in brain (at protein level).

It is found in the chromosome. The enzyme catalyses an N(6)-methyl-2'-deoxyadenosine in DNA + 2-oxoglutarate + O2 = a 2'-deoxyadenosine in DNA + formaldehyde + succinate + CO2. It catalyses the reaction a 5-methyl-2'-deoxycytidine in DNA + 2-oxoglutarate + O2 = a 5-hydroxymethyl-2'-deoxycytidine in DNA + succinate + CO2. The catalysed reaction is a 5-hydroxymethyl-2'-deoxycytidine in DNA + 2-oxoglutarate + O2 = a 5-formyl-2'-deoxycytidine in DNA + succinate + CO2 + H2O. It carries out the reaction a 5-formyl-2'-deoxycytidine in DNA + 2-oxoglutarate + O2 = a 5-carboxyl-2'-deoxycytidine in DNA + succinate + CO2 + H(+). In terms of biological role, dioxygenase that specifically demethylates DNA methylated on the 6th position of adenine (N(6)-methyladenosine) DNA. N(6)-methyladenosine (m6A) DNA is present at a relatively high level at the very earliest embryonic stages but at low levels at the late embryonic stages and may act as a regulator of gene expression. Promotes differentiation of early germ cells in ovary. Contributes to neuronal morphology, development, and function in the brain. By interacting with histone modifier wds, binds to a specific set of genes, modulates intragenic (N(6)-methyladenosine) DNA levels and thereby maintains transcriptional activation. Also able to catalyze the conversion of the modified genomic base 5-methylcytosine (5mC) into 5-hydroxymethylcytosine (5hmC). This Drosophila melanogaster (Fruit fly) protein is Methylcytosine dioxygenase TET.